Consider the following 358-residue polypeptide: Methylthioribose-1-phosphate isomerase (358 aa).

Substrate-binding positions include 54–56 (RGA), arginine 96, and glutamine 205. The active-site Proton donor is aspartate 246. 256–257 (NK) provides a ligand contact to substrate.

It belongs to the eIF-2B alpha/beta/delta subunits family. MtnA subfamily.

It carries out the reaction 5-(methylsulfanyl)-alpha-D-ribose 1-phosphate = 5-(methylsulfanyl)-D-ribulose 1-phosphate. Its pathway is amino-acid biosynthesis; L-methionine biosynthesis via salvage pathway; L-methionine from S-methyl-5-thio-alpha-D-ribose 1-phosphate: step 1/6. Functionally, catalyzes the interconversion of methylthioribose-1-phosphate (MTR-1-P) into methylthioribulose-1-phosphate (MTRu-1-P). This chain is Methylthioribose-1-phosphate isomerase, found in Pseudomonas paraeruginosa (strain DSM 24068 / PA7) (Pseudomonas aeruginosa (strain PA7)).